The primary structure comprises 216 residues: Somatotropin (216 aa).

The signal sequence occupies residues 1–26; it reads MAAGPRNSMLLVFALLSLPWPQEVGA. Zn(2+) is bound at residue His-45. A disulfide bridge connects residues Cys-78 and Cys-189. Position 131 is a phosphoserine (Ser-131). Glu-198 serves as a coordination point for Zn(2+). Cys-206 and Cys-214 are disulfide-bonded.

It belongs to the somatotropin/prolactin family.

Its subcellular location is the secreted. Functionally, plays an important role in growth control. Its major role in stimulating body growth is to stimulate the liver and other tissues to secrete IGF1. It stimulates both the differentiation and proliferation of myoblasts. It also stimulates amino acid uptake and protein synthesis in muscle and other tissues. The chain is Somatotropin (GH1) from Neovison vison (American mink).